A 103-amino-acid chain; its full sequence is Large ribosomal subunit protein bL21 (103 aa).

Belongs to the bacterial ribosomal protein bL21 family. In terms of assembly, part of the 50S ribosomal subunit. Contacts protein L20.

Its function is as follows. This protein binds to 23S rRNA in the presence of protein L20. This Methylibium petroleiphilum (strain ATCC BAA-1232 / LMG 22953 / PM1) protein is Large ribosomal subunit protein bL21.